The sequence spans 293 residues: Ribosomal protein L11 methyltransferase (293 aa).

Residues Thr-145, Gly-166, Asp-188, and Asn-230 each contribute to the S-adenosyl-L-methionine site.

It belongs to the methyltransferase superfamily. PrmA family.

It is found in the cytoplasm. The catalysed reaction is L-lysyl-[protein] + 3 S-adenosyl-L-methionine = N(6),N(6),N(6)-trimethyl-L-lysyl-[protein] + 3 S-adenosyl-L-homocysteine + 3 H(+). Methylates ribosomal protein L11. This chain is Ribosomal protein L11 methyltransferase, found in Shewanella woodyi (strain ATCC 51908 / MS32).